Consider the following 594-residue polypeptide: MKFSDVVDALERLERTTSRTQIVAILTNLFKKVIEENKDIIDKVVYFIQGKLWPDWYGYPEIGIGEKGIIKAISLAANVKEKEVEGLYKQLGDLGLVAERLMAKAPKGGLMMFVKKKEELTFEKVYETLKRIAFMQGEGSRDLKIKTLAGLLKEASPKEAKYIVRFVQGKLRLGVGDASIIEALAHVAGTTKDVVERAYNLRADLGAVAKIAVTEGPEALKRVRPKPGVPVRPMLAERLNDPKEILKKLGGKGLAEYKYDGERAQIHLLPDGKVVIFSRRLENITRSYPDVVQYAKSGLKAKEAIVEGEIIAVNPETGEPRPFQELMRRRRKHDVALAMSEIPVNVKLFDIIYVDGEDMTNKPLPLRRKRLEEVVEESEEFSLSTAKLVSTPEELEQFFHQSISEGHEGLVVKAVHDKSVYQAGARGWLWIKYKKDYKSEMVEPVDLVVVGAFYGRGRRGGTFGALLVAGYDEKRDAFATVCKVGSGFSDEELARLPELLKPYISETKPPRVISNVKPDVWVRPALVAEIIGAEITLSPIHTCAKDEVSAGSGLAIRFPRFIRWRPDKGPEDATTCGEIVEMYKSRLKKVEEPT.

Position 256 (E256) interacts with ATP. Residue K258 is the N6-AMP-lysine intermediate of the active site. Residues R263, R279, E309, F349, R426, and K432 each contribute to the ATP site.

The protein belongs to the ATP-dependent DNA ligase family. Mg(2+) is required as a cofactor.

The enzyme catalyses ATP + (deoxyribonucleotide)n-3'-hydroxyl + 5'-phospho-(deoxyribonucleotide)m = (deoxyribonucleotide)n+m + AMP + diphosphate.. In terms of biological role, DNA ligase that seals nicks in double-stranded DNA during DNA replication, DNA recombination and DNA repair. This is DNA ligase from Ignicoccus hospitalis (strain KIN4/I / DSM 18386 / JCM 14125).